A 375-amino-acid chain; its full sequence is MSDVIALAKDLIRRPSVTPLDEGCQTLMAERLAKLGFVIEPMVFEDTTNLWARRGSEGPLFCFAGHTDVVPAGPLDKWHTPPFEPTIQDGVLYGRGAADMKGSLAAMVVAVERFVAEHPDHSGSIAFLITSDEEGPFINGTTRVIDTLEARHEKITWCIVGEPSSTTVVGDVVKNGRRGSITGDLLVRGVQGHVAYPHLADNPIHKAAPALAELAATVWDEGNAYFPPTSFQIANISAGTGASNVIPGELHVQFNFRFSTELTDLDIRERVEALLDRHGLDYQLDWTLSGQPFLTDTGKLLAAAVSAIEAVNGQQPALLTTGGTSDGRFIAPTGAEVIELGPVNATIHKVNECVKADDLDLLADMYQGVLARLLA.

Position 66 (His66) interacts with Zn(2+). Asp68 is a catalytic residue. A Zn(2+)-binding site is contributed by Asp99. The active-site Proton acceptor is Glu133. Glu134, Glu162, and His348 together coordinate Zn(2+).

Belongs to the peptidase M20A family. DapE subfamily. Homodimer. The cofactor is Zn(2+). Co(2+) is required as a cofactor.

The enzyme catalyses N-succinyl-(2S,6S)-2,6-diaminopimelate + H2O = (2S,6S)-2,6-diaminopimelate + succinate. It participates in amino-acid biosynthesis; L-lysine biosynthesis via DAP pathway; LL-2,6-diaminopimelate from (S)-tetrahydrodipicolinate (succinylase route): step 3/3. Functionally, catalyzes the hydrolysis of N-succinyl-L,L-diaminopimelic acid (SDAP), forming succinate and LL-2,6-diaminopimelate (DAP), an intermediate involved in the bacterial biosynthesis of lysine and meso-diaminopimelic acid, an essential component of bacterial cell walls. The protein is Succinyl-diaminopimelate desuccinylase of Aeromonas hydrophila subsp. hydrophila (strain ATCC 7966 / DSM 30187 / BCRC 13018 / CCUG 14551 / JCM 1027 / KCTC 2358 / NCIMB 9240 / NCTC 8049).